The following is a 432-amino-acid chain: MSSSCSGLTRVLVAVATALVSSSSPCPQAWGPPGVQYGQPGRPVMLCCPGVSAGTPVSWFRDGDSRLLQGPDSGLGHRLVLAQVDSPDEGTYVCQTLDGVSGGMVTLKLGFPPARPEVSCQAVDYENFSCTWSPGQVSGLPTRYLTSYRKKTLPGAESQRESPSTGPWPCPQDPLEASRCVVHGAEFWSEYRINVTEVNPLGASTCLLDVRLQSILRPDPPQGLRVESVPGYPRRLHASWTYPASWRRQPHFLLKFRLQYRPAQHPAWSTVEPIGLEEVITDTVAGLPHAVRVSARDFLDAGTWSAWSPEAWGTPSTGLLQDEIPDWSQGHGQQLEAVVAQEDSLAPARPSLQPDPRPLDHRDPLEQVAVLASLGIFSCLGLAVGALALGLWLRLRRSGKEGPQKPGLLAPMIPVEKLPGIPNLQRTPENFS.

An N-terminal signal peptide occupies residues 1–23 (MSSSCSGLTRVLVAVATALVSSS). The Extracellular segment spans residues 24-372 (SPCPQAWGPP…DPLEQVAVLA (349 aa)). Positions 27–110 (PQAWGPPGVQ…SGGMVTLKLG (84 aa)) constitute an Ig-like C2-type domain. Cystine bridges form between Cys48–Cys94, Cys120–Cys130, and Cys170–Cys180. Fibronectin type-III domains lie at 112 to 219 (PPAR…LRPD) and 220 to 317 (PPQG…TPST). Residue Asn127 is glycosylated (N-linked (GlcNAc...) asparagine). The disordered stretch occupies residues 151–170 (KTLPGAESQRESPSTGPWPC). N-linked (GlcNAc...) asparagine glycosylation occurs at Asn194. A WSXWS motif motif is present at residues 304-308 (WSAWS). The helical transmembrane segment at 373–393 (SLGIFSCLGLAVGALALGLWL) threads the bilayer. The Cytoplasmic segment spans residues 394–432 (RLRRSGKEGPQKPGLLAPMIPVEKLPGIPNLQRTPENFS).

It belongs to the type I cytokine receptor family. Type 3 subfamily. In terms of assembly, on ligand binding, forms a multimer complex with IL6ST/gp130. As to expression, expression restricted to testis, lymph node and thymus. Highest level in testis.

Its subcellular location is the membrane. In terms of biological role, receptor for interleukin-11. The receptor systems for IL6, LIF, OSM, CNTF, IL11 and CT1 can utilize IL6ST for initiating signal transmission. The IL11/IL11RA/IL6ST complex may be involved in the control of proliferation and/or differentiation of skeletogenic progenitor or other mesenchymal cells. This Mus musculus (Mouse) protein is Interleukin-11 receptor subunit alpha-2 (Il11ra2).